The chain runs to 79 residues: RNA-binding protein Hfq (79 aa).

Positions 10–70 constitute a Sm domain; it reads DVFLNTVRKQ…ISTIMPGQPV (61 aa).

This sequence belongs to the Hfq family. As to quaternary structure, homohexamer.

Its function is as follows. RNA chaperone that binds small regulatory RNA (sRNAs) and mRNAs to facilitate mRNA translational regulation in response to envelope stress, environmental stress and changes in metabolite concentrations. Also binds with high specificity to tRNAs. This is RNA-binding protein Hfq from Bartonella henselae (strain ATCC 49882 / DSM 28221 / CCUG 30454 / Houston 1) (Rochalimaea henselae).